Reading from the N-terminus, the 259-residue chain is Methanethiol S-methyltransferase 2 (259 aa).

5 helical membrane passes run 5–25, 46–66, 88–108, 115–135, and 182–202; these read LAIL…FLYA, LGEA…QHSV, TYVL…RPIP, SGIA…IAFA, and FLLA…FALA.

It belongs to the nurim family.

It is found in the membrane. The catalysed reaction is methanethiol + S-adenosyl-L-methionine = dimethyl sulfide + S-adenosyl-L-homocysteine + H(+). Catalyzes the methylation of methanethiol (MeSH) to yield dimethylsulphide (DMS). This Bradyrhizobium diazoefficiens (strain JCM 10833 / BCRC 13528 / IAM 13628 / NBRC 14792 / USDA 110) protein is Methanethiol S-methyltransferase 2.